The following is a 706-amino-acid chain: Fatty acid oxidation complex subunit alpha (706 aa).

The segment at 1 to 188 (MEKTFNLTRR…KMGLVNDVVP (188 aa)) is enoyl-CoA hydratase. A 3-hydroxyacyl-CoA dehydrogenase region spans residues 308–706 (RKVKKAVILG…TMARENVSFF (399 aa)).

This sequence in the N-terminal section; belongs to the enoyl-CoA hydratase/isomerase family. The protein in the central section; belongs to the 3-hydroxyacyl-CoA dehydrogenase family. As to quaternary structure, heterotetramer of two alpha chains (FadJ) and two beta chains (FadI).

The protein localises to the cytoplasm. The enzyme catalyses a (3S)-3-hydroxyacyl-CoA = a (2E)-enoyl-CoA + H2O. It catalyses the reaction a 4-saturated-(3S)-3-hydroxyacyl-CoA = a (3E)-enoyl-CoA + H2O. The catalysed reaction is a (3S)-3-hydroxyacyl-CoA + NAD(+) = a 3-oxoacyl-CoA + NADH + H(+). It carries out the reaction (3S)-3-hydroxybutanoyl-CoA = (3R)-3-hydroxybutanoyl-CoA. The protein operates within lipid metabolism; fatty acid beta-oxidation. Its function is as follows. Catalyzes the formation of a hydroxyacyl-CoA by addition of water on enoyl-CoA. Also exhibits 3-hydroxyacyl-CoA epimerase and 3-hydroxyacyl-CoA dehydrogenase activities. In Shewanella sp. (strain W3-18-1), this protein is Fatty acid oxidation complex subunit alpha.